The sequence spans 396 residues: S-adenosylmethionine synthase (396 aa).

His14 serves as a coordination point for ATP. Residue Asp16 participates in Mg(2+) binding. Glu42 provides a ligand contact to K(+). Glu55 and Gln98 together coordinate L-methionine. The segment at 98-108 (QSPDIAMGVDK) is flexible loop. Residues 174–176 (DGK), 240–241 (RF), Asp249, 255–256 (RK), Ala272, and Lys276 contribute to the ATP site. Asp249 contributes to the L-methionine binding site. Residue Lys280 participates in L-methionine binding.

Belongs to the AdoMet synthase family. As to quaternary structure, homotetramer; dimer of dimers. The cofactor is Mg(2+). It depends on K(+) as a cofactor.

The protein resides in the cytoplasm. The catalysed reaction is L-methionine + ATP + H2O = S-adenosyl-L-methionine + phosphate + diphosphate. Its pathway is amino-acid biosynthesis; S-adenosyl-L-methionine biosynthesis; S-adenosyl-L-methionine from L-methionine: step 1/1. Catalyzes the formation of S-adenosylmethionine (AdoMet) from methionine and ATP. The overall synthetic reaction is composed of two sequential steps, AdoMet formation and the subsequent tripolyphosphate hydrolysis which occurs prior to release of AdoMet from the enzyme. The polypeptide is S-adenosylmethionine synthase (Caldicellulosiruptor saccharolyticus (strain ATCC 43494 / DSM 8903 / Tp8T 6331)).